A 485-amino-acid chain; its full sequence is Glutamate--tRNA ligase (485 aa).

Positions 11 to 21 (PSPTGLLHIGN) match the 'HIGH' region motif. Residues 255 to 259 (KLSKR) carry the 'KMSKS' region motif. Lys-258 serves as a coordination point for ATP.

It belongs to the class-I aminoacyl-tRNA synthetase family. Glutamate--tRNA ligase type 1 subfamily. As to quaternary structure, monomer.

It localises to the cytoplasm. The enzyme catalyses tRNA(Glu) + L-glutamate + ATP = L-glutamyl-tRNA(Glu) + AMP + diphosphate. Functionally, catalyzes the attachment of glutamate to tRNA(Glu) in a two-step reaction: glutamate is first activated by ATP to form Glu-AMP and then transferred to the acceptor end of tRNA(Glu). The sequence is that of Glutamate--tRNA ligase from Streptococcus sanguinis (strain SK36).